We begin with the raw amino-acid sequence, 855 residues long: Beclin-1-like protein B (855 aa).

4 disordered regions span residues 92–212 (FGKR…GSLS), 236–271 (LVAD…ESNN), 294–380 (ATIP…QKPR), and 407–475 (VDGG…QQQP). 2 stretches are compositionally biased toward low complexity: residues 99–123 (TQSN…SLSL) and 131–143 (QQQQ…QQQT). A compositionally biased stretch (polar residues) spans 144-156 (FNDQSKLTATTPT). Residues 177 to 200 (HSNNSSNGSDHGGNVNTTGVSPSS) are compositionally biased toward low complexity. A compositionally biased stretch (low complexity) spans 294–348 (ATIPTTTTTSTPTTPSTVGGTTPSPPSSSSSSSSSSSVITSPISRISPSNITSPS). Composition is skewed to polar residues over residues 368-377 (LNISQVSSPQ) and 413-445 (SGTE…TTPP). Over residues 446 to 474 (LLSNSMNNSTNNLQSLQQQQQQQQQQQQQ) the composition is skewed to low complexity. Residues 538–595 (EKGKTEEDLEELGKEMTLLCEEEEQLRLMIENTHQERKEVEQLTLQLQDRIATLKSLE) are a coiled coil. Residues 826–855 (LNNNQNNNNINNNNNNNINNNNNNNVNKRN) form a disordered region.

Belongs to the beclin family.

Its subcellular location is the endosome membrane. Functionally, involved in autophagy. May be required to recruit the atg8-phosphatidylinositol conjugate and the atg12-atg5 conjugate to the pre-autophagosomal structure. The polypeptide is Beclin-1-like protein B (atg6B) (Dictyostelium discoideum (Social amoeba)).